A 681-amino-acid polypeptide reads, in one-letter code: uncharacterized protein (681 aa).

It belongs to the protein kinase superfamily. ADCK protein kinase family.

This is an uncharacterized protein from Synechocystis sp. (strain ATCC 27184 / PCC 6803 / Kazusa).